We begin with the raw amino-acid sequence, 478 residues long: DKDSYKVSGGLHGVGVSCVNALSTDMKVTVYSHGKVHQQEYKKGIPQYDVKEIGESEIHGTKVQFLPDDSIFTSSEYKYETIANRLRELSFLNKGIRITLQDHREVDADGKSEIETFHSEGGLREFVEYVDSTRERLIPRPLYMESDKGPIPVEVAMLYNTSYSENVFSYVNNINTVEGGTHVAGFRRALTRTLKSYADKSGMLEKLKMEVTGDDFREGLTAVISVKVQEPQFEGQTKTKLGNSDVMGAVDQVVGEMLNTYLEENPKEAKIIVQKVILAAQARNAARKAREMVQRKNVLSGSGLPGKLADCSESDPEKCEIYLVEGDSAGGSAKQGRDRKYHAILPLRGKILNVEKAQEHRIYENDEIKNMITALGVSFGTEEGEKVLNLTKLRYHKVIIMTDADIDGSHIRTLILTFFFRYMRALIDGGHVYIAQPPLYLVKRGKEEKYCWTEEQREVAVKELAKDGKEDSVGIQRY.

In terms of domain architecture, Toprim spans 319 to 438 (CEIYLVEGDS…GGHVYIAQPP (120 aa)). The Mg(2+) site is built by E325, D403, and D405.

The protein belongs to the type II topoisomerase GyrB family. In terms of assembly, heterotetramer, composed of two GyrA and two GyrB chains. In the heterotetramer, GyrA contains the active site tyrosine that forms a transient covalent intermediate with DNA, while GyrB binds cofactors and catalyzes ATP hydrolysis. It depends on Mg(2+) as a cofactor. Mn(2+) is required as a cofactor. Ca(2+) serves as cofactor.

It is found in the cytoplasm. The catalysed reaction is ATP-dependent breakage, passage and rejoining of double-stranded DNA.. In terms of biological role, a type II topoisomerase that negatively supercoils closed circular double-stranded (ds) DNA in an ATP-dependent manner to modulate DNA topology and maintain chromosomes in an underwound state. Negative supercoiling favors strand separation, and DNA replication, transcription, recombination and repair, all of which involve strand separation. Also able to catalyze the interconversion of other topological isomers of dsDNA rings, including catenanes and knotted rings. Type II topoisomerases break and join 2 DNA strands simultaneously in an ATP-dependent manner. The protein is DNA gyrase subunit B (gyrB) of Cytophaga aurantiaca.